The following is a 1938-amino-acid chain: Myosin-1 (1938 aa).

The segment at 1–27 (MSLEHEKDPGWQYLKRSREQQLADQSR) is disordered. Residues 16-27 (RSREQQLADQSR) are compositionally biased toward basic and acidic residues. A Myosin N-terminal SH3-like domain is found at 30–80 (DSKKNVWIPDAEEGYIEGVIKGPGPKADTVIVTAGGKDVTLKKDIVQEVNP). The 702-residue stretch at 84 to 785 (EKTEDMSNLT…VVAHIEDLRD (702 aa)) folds into the Myosin motor domain. N6,N6,N6-trimethyllysine is present on lysine 128. 177–184 (GESGAGKT) contributes to the ATP binding site. Actin-binding regions lie at residues 660–682 (LNKLMTMLHKTHPHFIRCIIPNE) and 764–778 (RIGHTKVFFKAGVVA). The interval 846-1170 (QLKCGKMAEE…NKQLEIQQDN (325 aa)) is alpha-helical tailpiece (short S2). The segment at 846-1938 (QLKCGKMAEE…GQVVRSATNK (1093 aa)) is rodlike tail (S2 and LMM domains). The stretch at 846–1938 (QLKCGKMAEE…GQVVRSATNK (1093 aa)) forms a coiled coil. The interval 919–951 (RQEVEKSLNDANDRLSEHEEKNADLEKQRRKAQ) is disordered. Over residues 920-951 (QEVEKSLNDANDRLSEHEEKNADLEKQRRKAQ) the composition is skewed to basic and acidic residues. The interval 1171–1938 (NKKKDSEIIK…GQVVRSATNK (768 aa)) is light meromyosin (LMM).

The protein belongs to the TRAFAC class myosin-kinesin ATPase superfamily. Myosin family. As to quaternary structure, muscle myosin is a hexameric protein that consists of 2 heavy chain subunits (MHC), 2 alkali light chain subunits (MLC) and 2 regulatory light chain subunits (MLC-2). Interacts with itr-1 (via c-terminal coiled coil domain). As to expression, found exclusively in the pharyngeal muscle.

Its subcellular location is the cytoplasm. The protein resides in the myofibril. Functionally, muscle contraction. The sequence is that of Myosin-1 from Caenorhabditis elegans.